Consider the following 331-residue polypeptide: Aspartate carbamoyltransferase catalytic subunit (331 aa).

2 residues coordinate carbamoyl phosphate: Arg-76 and Thr-77. Lys-104 is an L-aspartate binding site. Arg-126, His-154, and Gln-157 together coordinate carbamoyl phosphate. Residues Arg-187 and Arg-246 each coordinate L-aspartate. Carbamoyl phosphate is bound by residues Gly-287 and Pro-288.

Belongs to the aspartate/ornithine carbamoyltransferase superfamily. ATCase family. In terms of assembly, heterododecamer (2C3:3R2) of six catalytic PyrB chains organized as two trimers (C3), and six regulatory PyrI chains organized as three dimers (R2).

It carries out the reaction carbamoyl phosphate + L-aspartate = N-carbamoyl-L-aspartate + phosphate + H(+). It participates in pyrimidine metabolism; UMP biosynthesis via de novo pathway; (S)-dihydroorotate from bicarbonate: step 2/3. Functionally, catalyzes the condensation of carbamoyl phosphate and aspartate to form carbamoyl aspartate and inorganic phosphate, the committed step in the de novo pyrimidine nucleotide biosynthesis pathway. The polypeptide is Aspartate carbamoyltransferase catalytic subunit (Dehalococcoides mccartyi (strain CBDB1)).